Consider the following 239-residue polypeptide: Probable transcriptional regulatory protein ABO_1803 (239 aa).

It belongs to the TACO1 family.

The protein localises to the cytoplasm. In Alcanivorax borkumensis (strain ATCC 700651 / DSM 11573 / NCIMB 13689 / SK2), this protein is Probable transcriptional regulatory protein ABO_1803.